The sequence spans 429 residues: Alpha-galactosidase A (429 aa).

Positions 1 to 31 are cleaved as a signal peptide; sequence MQLRNPELHLGCALALRFLALVSWDIPGARA. Cystine bridges form between cysteine 52–cysteine 94 and cysteine 56–cysteine 63. N-linked (GlcNAc...) asparagine glycosylation is present at asparagine 139. A disulfide bridge connects residues cysteine 142 and cysteine 172. Aspartate 170 acts as the Nucleophile in catalysis. N-linked (GlcNAc...) asparagine glycosylation is present at asparagine 192. Cysteines 202 and 223 form a disulfide. A substrate-binding site is contributed by 203–207; it reads EWPLY. Asparagine 215 carries N-linked (GlcNAc...) asparagine glycosylation. The active-site Proton donor is the aspartate 231. A disulfide bridge connects residues cysteine 378 and cysteine 382.

This sequence belongs to the glycosyl hydrolase 27 family. Homodimer.

Its subcellular location is the lysosome. It carries out the reaction Hydrolysis of terminal, non-reducing alpha-D-galactose residues in alpha-D-galactosides, including galactose oligosaccharides, galactomannans and galactolipids.. The enzyme catalyses a globoside Gb3Cer (d18:1(4E)) + H2O = a beta-D-Gal-(1-&gt;4)-beta-D-Glc-(1&lt;-&gt;1)-Cer(d18:1(4E)) + D-galactose. It catalyses the reaction a globoside Gb3Cer + H2O = a beta-D-galactosyl-(1-&gt;4)-beta-D-glucosyl-(1&lt;-&gt;1)-ceramide + D-galactose. Its activity is regulated as follows. Galactosylgalactosylglucosylceramidase activity is stimulated by saposin B and ammonium chloride. Catalyzes the hydrolysis of glycosphingolipids and participates in their degradation in the lysosome. The protein is Alpha-galactosidase A of Homo sapiens (Human).